A 106-amino-acid chain; its full sequence is ATP-dependent Clp protease adapter protein ClpS (106 aa).

Belongs to the ClpS family. Binds to the N-terminal domain of the chaperone ClpA.

Its function is as follows. Involved in the modulation of the specificity of the ClpAP-mediated ATP-dependent protein degradation. In Enterobacter sp. (strain 638), this protein is ATP-dependent Clp protease adapter protein ClpS.